The sequence spans 166 residues: Ribonuclease P protein component (166 aa).

Belongs to the RnpA family. As to quaternary structure, consists of a catalytic RNA component (M1 or rnpB) and a protein subunit.

It carries out the reaction Endonucleolytic cleavage of RNA, removing 5'-extranucleotides from tRNA precursor.. Functionally, RNaseP catalyzes the removal of the 5'-leader sequence from pre-tRNA to produce the mature 5'-terminus. It can also cleave other RNA substrates such as 4.5S RNA. The protein component plays an auxiliary but essential role in vivo by binding to the 5'-leader sequence and broadening the substrate specificity of the ribozyme. In Helicobacter pylori (strain HPAG1), this protein is Ribonuclease P protein component.